A 399-amino-acid polypeptide reads, in one-letter code: Acetate kinase (399 aa).

Asn-10 contacts Mg(2+). Position 17 (Lys-17) interacts with ATP. Residue Arg-91 coordinates substrate. Residue Asp-150 is the Proton donor/acceptor of the active site. Residues 210–214 (HLGNG), 285–287 (DFR), and 333–337 (GIGEN) each bind ATP. Glu-387 contacts Mg(2+).

Belongs to the acetokinase family. Homodimer. Mg(2+) is required as a cofactor. It depends on Mn(2+) as a cofactor.

The protein localises to the cytoplasm. It catalyses the reaction acetate + ATP = acetyl phosphate + ADP. Its pathway is metabolic intermediate biosynthesis; acetyl-CoA biosynthesis; acetyl-CoA from acetate: step 1/2. In terms of biological role, catalyzes the formation of acetyl phosphate from acetate and ATP. Can also catalyze the reverse reaction. The sequence is that of Acetate kinase from Wigglesworthia glossinidia brevipalpis.